Here is a 323-residue protein sequence, read N- to C-terminus: Beta-ketoacyl-[acyl-carrier-protein] synthase III (323 aa).

Catalysis depends on residues Cys114 and His250. The tract at residues 251–255 is ACP-binding; that stretch reads QANRR. Residue Asn280 is part of the active site.

It belongs to the thiolase-like superfamily. FabH family. As to quaternary structure, homodimer.

It localises to the cytoplasm. It catalyses the reaction malonyl-[ACP] + acetyl-CoA + H(+) = 3-oxobutanoyl-[ACP] + CO2 + CoA. It participates in lipid metabolism; fatty acid biosynthesis. Its function is as follows. Catalyzes the condensation reaction of fatty acid synthesis by the addition to an acyl acceptor of two carbons from malonyl-ACP. Catalyzes the first condensation reaction which initiates fatty acid synthesis and may therefore play a role in governing the total rate of fatty acid production. Possesses both acetoacetyl-ACP synthase and acetyl transacylase activities. Its substrate specificity determines the biosynthesis of branched-chain and/or straight-chain of fatty acids. The protein is Beta-ketoacyl-[acyl-carrier-protein] synthase III of Rhodospirillum centenum (strain ATCC 51521 / SW).